A 452-amino-acid chain; its full sequence is MRKRHSFDSTSTKKEAVSKAIQKIIKIMETTDPSLNVETPNAEIESILQEIKEIKQKLSKQAEDLGLLEKYCSQETLSNLENTNASLKLSIGSVIEELASLKQLVEESIEESLGQQDQLIQSVLIEISDKFLSSIGETLSGNLDMNQNVIQGLLIKENPEKSEAASVGYVQTLLEPLSKRIGETHKKVATHDVNISSLQFHMMSVAGGRFRGHIDMNGYRVLGLGEPKNGEDAVSKDYLERYVSSQLTIDKVEDKPITKPNKGKLLYSQGTSPKLEGPLPLGLLTSGISGFTWKSASKSNDGSFPFSALRHKETESDTDCFQITSTTLSGNQAGTYTWSLSLKVLVPSIFQIEKPEVQLSLVYSYEDWLPIDNIFNMSQPRTIPLALLGQTMLAGQKYDILELAAHQTNQTLMISPNCSRFSLQLKQTNQFENSPVDFYIVHAAHSCHWSGF.

This is an uncharacterized protein from Chlamydia pneumoniae (Chlamydophila pneumoniae).